A 550-amino-acid chain; its full sequence is Glucose-6-phosphate isomerase 2 (550 aa).

The Proton donor role is filled by glutamate 357. Residues histidine 388 and lysine 514 contribute to the active site. Residues 527–550 (DTGALGHDSSTNGLIRHYRERHGK) form a disordered region.

Belongs to the GPI family.

Its subcellular location is the cytoplasm. It carries out the reaction alpha-D-glucose 6-phosphate = beta-D-fructose 6-phosphate. It participates in carbohydrate biosynthesis; gluconeogenesis. Its pathway is carbohydrate degradation; glycolysis; D-glyceraldehyde 3-phosphate and glycerone phosphate from D-glucose: step 2/4. Catalyzes the reversible isomerization of glucose-6-phosphate to fructose-6-phosphate. This Chromobacterium violaceum (strain ATCC 12472 / DSM 30191 / JCM 1249 / CCUG 213 / NBRC 12614 / NCIMB 9131 / NCTC 9757 / MK) protein is Glucose-6-phosphate isomerase 2.